Here is a 106-residue protein sequence, read N- to C-terminus: UPF0213 protein VPA1222 (106 aa).

In terms of domain architecture, GIY-YIG spans 7-82; that stretch reads QHWSVYLIRN…KQLTKSKKEQ (76 aa).

It belongs to the UPF0213 family.

The protein is UPF0213 protein VPA1222 of Vibrio parahaemolyticus serotype O3:K6 (strain RIMD 2210633).